Here is a 146-residue protein sequence, read N- to C-terminus: Ribonuclease H (146 aa).

Residues 1 to 143 (MEKKVTIYTD…CDELARLAVR (143 aa)) form the RNase H type-1 domain. 4 residues coordinate Mg(2+): Asp10, Glu48, Asp70, and Asp135.

This sequence belongs to the RNase H family. In terms of assembly, monomer. It depends on Mg(2+) as a cofactor.

Its subcellular location is the cytoplasm. The enzyme catalyses Endonucleolytic cleavage to 5'-phosphomonoester.. In terms of biological role, endonuclease that specifically degrades the RNA of RNA-DNA hybrids. This chain is Ribonuclease H, found in Chlorobium phaeovibrioides (strain DSM 265 / 1930) (Prosthecochloris vibrioformis (strain DSM 265)).